Here is a 642-residue protein sequence, read N- to C-terminus: tRNA uridine 5-carboxymethylaminomethyl modification enzyme MnmG (642 aa).

Residues 10–15, Val-122, and Ser-177 each bind FAD; that span reads GAGHAG. 269–283 is a binding site for NAD(+); sequence SARYCPSLEDKVMRF. Residue Gln-366 coordinates FAD.

It belongs to the MnmG family. As to quaternary structure, homodimer. Heterotetramer of two MnmE and two MnmG subunits. FAD is required as a cofactor.

Its subcellular location is the cytoplasm. In terms of biological role, NAD-binding protein involved in the addition of a carboxymethylaminomethyl (cmnm) group at the wobble position (U34) of certain tRNAs, forming tRNA-cmnm(5)s(2)U34. This chain is tRNA uridine 5-carboxymethylaminomethyl modification enzyme MnmG, found in Syntrophobacter fumaroxidans (strain DSM 10017 / MPOB).